Reading from the N-terminus, the 441-residue chain is tRNA modification GTPase MnmE (441 aa).

(6S)-5-formyl-5,6,7,8-tetrahydrofolate contacts are provided by R21, E79, and K118. The TrmE-type G domain occupies 214–370 (GFKIAIVGKP…LEGYLKTQDT (157 aa)). GTP is bound by residues 224–229 (NVGKSS), 243–249 (SDEAGTT), and 268–271 (DTAG). Mg(2+) is bound by residues S228 and T249. K441 serves as a coordination point for (6S)-5-formyl-5,6,7,8-tetrahydrofolate.

It belongs to the TRAFAC class TrmE-Era-EngA-EngB-Septin-like GTPase superfamily. TrmE GTPase family. In terms of assembly, homodimer. Heterotetramer of two MnmE and two MnmG subunits. Requires K(+) as cofactor.

It is found in the cytoplasm. In terms of biological role, exhibits a very high intrinsic GTPase hydrolysis rate. Involved in the addition of a carboxymethylaminomethyl (cmnm) group at the wobble position (U34) of certain tRNAs, forming tRNA-cmnm(5)s(2)U34. The chain is tRNA modification GTPase MnmE from Campylobacter concisus (strain 13826).